A 57-amino-acid chain; its full sequence is Stress response protein (57 aa).

Positions 6 to 10 match the Nuclear localization signal motif; sequence RKERR.

Mesophyll protoplasts.

The protein localises to the nucleus. Functionally, stress response. May play a role in the reentering of protoplasts into the cell cycle. This Nicotiana sylvestris (Wood tobacco) protein is Stress response protein.